A 380-amino-acid polypeptide reads, in one-letter code: Succinyl-diaminopimelate desuccinylase (380 aa).

Histidine 71 provides a ligand contact to Zn(2+). Aspartate 73 is a catalytic residue. Aspartate 104 provides a ligand contact to Zn(2+). Glutamate 138 serves as the catalytic Proton acceptor. Positions 139, 167, and 353 each coordinate Zn(2+).

This sequence belongs to the peptidase M20A family. DapE subfamily. As to quaternary structure, homodimer. It depends on Zn(2+) as a cofactor. Co(2+) is required as a cofactor.

It carries out the reaction N-succinyl-(2S,6S)-2,6-diaminopimelate + H2O = (2S,6S)-2,6-diaminopimelate + succinate. Its pathway is amino-acid biosynthesis; L-lysine biosynthesis via DAP pathway; LL-2,6-diaminopimelate from (S)-tetrahydrodipicolinate (succinylase route): step 3/3. Functionally, catalyzes the hydrolysis of N-succinyl-L,L-diaminopimelic acid (SDAP), forming succinate and LL-2,6-diaminopimelate (DAP), an intermediate involved in the bacterial biosynthesis of lysine and meso-diaminopimelic acid, an essential component of bacterial cell walls. The protein is Succinyl-diaminopimelate desuccinylase of Shewanella baltica (strain OS185).